The following is a 322-amino-acid chain: D-alanine--D-alanine ligase (322 aa).

The ATP-grasp domain occupies 108–311 (KEFYYNAELP…FPSLLDTLIE (204 aa)). 136–192 (IEDLGLPLVVKPACAGSSIGISLAHTEEELLAGINHARDCSAGAIMVEQFIKGRELT) contacts ATP. Mg(2+) contacts are provided by aspartate 265, glutamate 278, and asparagine 280.

This sequence belongs to the D-alanine--D-alanine ligase family. Mg(2+) is required as a cofactor. The cofactor is Mn(2+).

It is found in the cytoplasm. The catalysed reaction is 2 D-alanine + ATP = D-alanyl-D-alanine + ADP + phosphate + H(+). Its pathway is cell wall biogenesis; peptidoglycan biosynthesis. Its function is as follows. Cell wall formation. The protein is D-alanine--D-alanine ligase of Desulfotalea psychrophila (strain LSv54 / DSM 12343).